The chain runs to 573 residues: MTPESRDTTDLSPRGTQEMEGIVVVKVEEEDEEDHFQKQRNKVESSPQVLSRSTTMNERALLSSYLVAYRVAKEKMAHTAAEKIILPACMDMVRTIFDDKSADKLRTIPLSDNTISRRICTIAKHLEAMLITRLQSGIDFAIQLDESTDIASCPTLLVYVRYVWQDDFVEDLLCCLNLNSHITGLDLFTELENCIVGQYKLNWKHCKGISSDGAANMTGKHSRLTEKLLEATHNNALWNHCFIHREALVSKEISPSLMDVLKKAVKIVNFIKGSSLNSRLLEILCSEIGVNHTHLLFHTEVRWLSQGKVLSRVYELRNEIYIFLIEKQSHLANIFENDIWVTKLAYLSDIFGILNELNLKIQGKNNDIFQYLEHILGFQKTLLFWQARLKSNRPSYYMFPTLLQHIEENIINEDCLKEIKLEILLHLTSLSQTFNYYFPEEKFESLKENIWMKDPFAFQNPASIIKLNLEPEEENELLQLSSSFTLKNYYKTLSLSAFWIKIKDEFPLLSRKSISLLLPFTTTYLCELGFSILTRLKTKKRNRLNSAPDMRVALSSCVPDWKELMNRQAHPSH.

The interval 1–51 (MTPESRDTTDLSPRGTQEMEGIVVVKVEEEDEEDHFQKQRNKVESSPQVLS) is disordered. Residues 1-513 (MTPESRDTTD…DEFPLLSRKS (513 aa)) are Extracellular-facing. Residues 514–533 (ISLLLPFTTTYLCELGFSIL) traverse the membrane as a helical segment. Residues 534–573 (TRLKTKKRNRLNSAPDMRVALSSCVPDWKELMNRQAHPSH) are Cytoplasmic-facing.

It belongs to the FAM200 family.

The protein localises to the membrane. In Macaca fascicularis (Crab-eating macaque), this protein is Protein FAM200A (FAM200A).